Consider the following 623-residue polypeptide: Phosphoglucomutase, chloroplastic (623 aa).

Residues M1–G63 constitute a chloroplast transit peptide. Residues R88 and S181 each contribute to the alpha-D-glucose 1,6-bisphosphate site. S181 acts as the Phosphoserine intermediate in catalysis. Positions 181, 346, 348, and 350 each coordinate Mg(2+). Phosphoserine is present on S181. D350, R351, T414, E433, S435, and K446 together coordinate alpha-D-glucose 1,6-bisphosphate.

This sequence belongs to the phosphohexose mutase family. In terms of assembly, monomer. Mg(2+) serves as cofactor. In terms of tissue distribution, expressed in flowers, siliques and germinating seeds.

The protein localises to the plastid. It localises to the chloroplast. It carries out the reaction alpha-D-glucose 1-phosphate = alpha-D-glucose 6-phosphate. It catalyses the reaction O-phospho-L-seryl-[protein] + alpha-D-glucose 1-phosphate = alpha-D-glucose 1,6-bisphosphate + L-seryl-[protein]. The catalysed reaction is alpha-D-glucose 1,6-bisphosphate + L-seryl-[protein] = O-phospho-L-seryl-[protein] + alpha-D-glucose 6-phosphate. With respect to regulation, inhibited by the Calvin cycle intermediates fructose-1,6-bisphosphate and ribulose-1,5-bisphosphate. Its function is as follows. Catalyzes the reversible isomerization of alpha-D-glucose 1-phosphate to alpha-D-glucose 6-phosphate. The mechanism proceeds via the intermediate compound alpha-D-glucose 1,6-bisphosphate. This enzyme participates in both the breakdown and synthesis of glucose. Factor that affects seed oil content. Accumulated starch in young embryos may play an important role in providing carbon resources for seed storage lipid biosynthesis in oilseed plants. Promotes gravitropic responses, negative in shoots but positive in roots, by facilitating starch granules (statoliths) formation in hypocotyls and roots columella. The polypeptide is Phosphoglucomutase, chloroplastic (Arabidopsis thaliana (Mouse-ear cress)).